Consider the following 404-residue polypeptide: MILTSFGDDMWLLTTLLLWVPVGGEVVNATKAVITLQPPWVSIFQKENVTLWCEGPHLPGDSSTQWFINGTAVQISTPSYSIPEASFQDSGEYRCQIGSSMPSDPVQLQIHNDWLLLQASRRVLTEGEPLALRCHGWKNKLVYNVVFYRNGKSFQFSSDSEVAILKTNLSHSGIYHCSGTGRHRYTSAGVSITVKELFTTPVLRASVSSPFPEGSLVTLNCETNLLLQRPGLQLHFSFYVGSKILEYRNTSSEYHIARAEREDAGFYWCEVATEDSSVLKRSPELELQVLGPQSSAPVWFHILFYLSVGIMFSLNTVLYVKIHRLQREKKYNLEVPLVSEQGKKANSFQQVRSDGVYEEVTATASQTTPKEAPDGPRSSVGDCGPEQPEPLPPSDSTGAQTSQS.

An N-terminal signal peptide occupies residues 1–24 (MILTSFGDDMWLLTTLLLWVPVGG). Over 25–297 (EVVNATKAVI…QVLGPQSSAP (273 aa)) the chain is Extracellular. Asn28, Asn48, Asn69, Asn168, and Asn249 each carry an N-linked (GlcNAc...) asparagine glycan. Ig-like C2-type domains lie at 32–111 (AVIT…LQIH), 117–194 (LQAS…SITV), and 201–286 (PVLR…PELE). 3 disulfide bridges follow: Cys53/Cys95, Cys134/Cys177, and Cys221/Cys269. A helical transmembrane segment spans residues 298 to 320 (VWFHILFYLSVGIMFSLNTVLYV). The interaction with EPB41L2 stretch occupies residues 321 to 342 (KIHRLQREKKYNLEVPLVSEQG). Residues 321-404 (KIHRLQREKK…DSTGAQTSQS (84 aa)) are Cytoplasmic-facing. The disordered stretch occupies residues 346–404 (NSFQQVRSDGVYEEVTATASQTTPKEAPDGPRSSVGDCGPEQPEPLPPSDSTGAQTSQS). Ser347 carries the post-translational modification Phosphoserine. Thr368 is subject to Phosphothreonine. Residues 394–404 (SDSTGAQTSQS) are compositionally biased toward polar residues.

It belongs to the immunoglobulin superfamily. FCGR1 family. Interacts with FCERG1; forms a functional signaling complex. Interacts with FLNA; prevents FCGR1A degradation. Interacts with EPB41L2, LAT and PPL. Interacts with HCK and LYN. In terms of processing, N-glycosylated. Post-translationally, phosphorylated on serine residues. As to expression, macrophage-specific.

Its subcellular location is the cell membrane. Functionally, high affinity receptor for the Fc region of immunoglobulins gamma. Functions in both innate and adaptive immune responses. The polypeptide is High affinity immunoglobulin gamma Fc receptor I (Fcgr1) (Mus musculus (Mouse)).